Reading from the N-terminus, the 139-residue chain is ATP synthase epsilon chain (139 aa).

This sequence belongs to the ATPase epsilon chain family. As to quaternary structure, F-type ATPases have 2 components, CF(1) - the catalytic core - and CF(0) - the membrane proton channel. CF(1) has five subunits: alpha(3), beta(3), gamma(1), delta(1), epsilon(1). CF(0) has three main subunits: a, b and c.

It is found in the cell inner membrane. In terms of biological role, produces ATP from ADP in the presence of a proton gradient across the membrane. The chain is ATP synthase epsilon chain from Escherichia coli O139:H28 (strain E24377A / ETEC).